A 514-amino-acid polypeptide reads, in one-letter code: Protein nucleotidyltransferase YdiU (514 aa).

ATP is bound by residues glycine 90, glycine 92, arginine 93, lysine 113, aspartate 125, glycine 126, arginine 176, and arginine 183. Residue aspartate 267 is the Proton acceptor of the active site. Residues asparagine 268 and aspartate 277 each coordinate Mg(2+). Aspartate 277 is an ATP binding site.

It belongs to the SELO family. It depends on Mg(2+) as a cofactor. The cofactor is Mn(2+).

The catalysed reaction is L-seryl-[protein] + ATP = 3-O-(5'-adenylyl)-L-seryl-[protein] + diphosphate. The enzyme catalyses L-threonyl-[protein] + ATP = 3-O-(5'-adenylyl)-L-threonyl-[protein] + diphosphate. It carries out the reaction L-tyrosyl-[protein] + ATP = O-(5'-adenylyl)-L-tyrosyl-[protein] + diphosphate. It catalyses the reaction L-histidyl-[protein] + UTP = N(tele)-(5'-uridylyl)-L-histidyl-[protein] + diphosphate. The catalysed reaction is L-seryl-[protein] + UTP = O-(5'-uridylyl)-L-seryl-[protein] + diphosphate. The enzyme catalyses L-tyrosyl-[protein] + UTP = O-(5'-uridylyl)-L-tyrosyl-[protein] + diphosphate. In terms of biological role, nucleotidyltransferase involved in the post-translational modification of proteins. It can catalyze the addition of adenosine monophosphate (AMP) or uridine monophosphate (UMP) to a protein, resulting in modifications known as AMPylation and UMPylation. This is Protein nucleotidyltransferase YdiU from Photobacterium profundum (strain SS9).